The following is an 87-amino-acid chain: U3-theraphotoxin-Hhn1a 2 (87 aa).

A signal peptide spans 1-24 (MVNMKASMFLTFAGLVLLFVVCYA). A propeptide spanning residues 25–52 (SESEEKEFPKEMLSSIFAVDDDFKQEER) is cleaved from the precursor. Disulfide bonds link cysteine 54/cysteine 67, cysteine 61/cysteine 72, and cysteine 66/cysteine 79.

Belongs to the neurotoxin 10 (Hwtx-1) family. 51 (Hntx-8) subfamily. Hntx-8 sub-subfamily. As to expression, expressed by the venom gland.

The protein resides in the secreted. Ion channel inhibitor. The chain is U3-theraphotoxin-Hhn1a 2 from Cyriopagopus hainanus (Chinese bird spider).